Here is a 196-residue protein sequence, read N- to C-terminus: V-type proton ATPase proteolipid subunit (196 aa).

The Lumenal portion of the chain corresponds to 1–25; the sequence is MFQLLSFLLSGEATAVERIITDACP. Residues 26–46 form a helical membrane-spanning segment; the sequence is VYAPFFGAMGVTAALVFTVMG. The Cytoplasmic segment spans residues 47 to 72; that stretch reads AAYGTAKASVGISNMGVMKPDLVIKA. A helical transmembrane segment spans residues 73–93; it reads FIPVIFAGVIAIYGLIICVIL. Residues 94–111 are Lumenal-facing; that stretch reads VGGIKPNANYTLMKSFTD. The chain crosses the membrane as a helical span at residues 112–132; the sequence is LGAGLTVGLCGLAAGMAIGIV. The Cytoplasmic portion of the chain corresponds to 133–150; it reads GDSGVRAFGQQPKLYVIM. The chain crosses the membrane as a helical span at residues 151 to 171; the sequence is MLILIFSEALGLYGLIIGILL. Over 172–196 the chain is Lumenal; the sequence is SSVSDTYCPGQALVPLNSGNVIGKN.

Belongs to the V-ATPase proteolipid subunit family. As to quaternary structure, V-ATPase is a heteromultimeric enzyme composed of a peripheral catalytic V1 complex (main components: subunits A, B, C, D, E, and F) attached to an integral membrane V0 proton pore complex (main component: the proteolipid protein; which is present as a hexamer that forms the proton-conducting pore).

It is found in the vacuole membrane. Proton-conducting pore forming subunit of the membrane integral V0 complex of vacuolar ATPase. V-ATPase is responsible for acidifying a variety of intracellular compartments in eukaryotic cells. The protein is V-type proton ATPase proteolipid subunit (vatP) of Dictyostelium discoideum (Social amoeba).